Here is a 116-residue protein sequence, read N- to C-terminus: Protein V2 (116 aa).

Belongs to the geminiviridae protein AV2/V2 family. As to quaternary structure, interacts with host SGS3.

Its subcellular location is the host cytoplasm. It localises to the host perinuclear region. Functionally, through its interaction with host SGS3, acts as a suppressor of RNA-mediated gene silencing, also known as post-transcriptional gene silencing (PTGS), a mechanism of plant viral defense that limits the accumulation of viral RNAs. In Tomato yellow leaf curl virus (strain Israel) (TYLCV), this protein is Protein V2.